A 482-amino-acid polypeptide reads, in one-letter code: Anthocyanin 3'-O-beta-glucosyltransferase (482 aa).

The active-site Proton acceptor is the H16. Position 16 (H16) interacts with an anthocyanidin. D119 functions as the Charge relay in the catalytic mechanism. Residues A349, Q351, H366, W369, N370, S371, and E374 each contribute to the UDP-alpha-D-glucose site. Position 389 (A389) interacts with an anthocyanidin. The UDP-alpha-D-glucose site is built by E390 and Q391.

It belongs to the UDP-glycosyltransferase family. Post-translationally, the N-terminus is blocked. In terms of tissue distribution, abundant in petals and barely detected in leaves.

It catalyses the reaction delphinidin 3,5-bis-O-beta-D-glucoside + UDP-alpha-D-glucose = delphinidin 3,3',5-tri-O-beta-D-glucoside + UDP + H(+). Specifically glucosylates the 3'-hydroxy group of delphinidin 3,5-di-O-glucoside to produce gentiodelphin. Shows a strict specificity for UDP-glucose as donor. The polypeptide is Anthocyanin 3'-O-beta-glucosyltransferase (Gentiana triflora (Clustered gentian)).